The sequence spans 72 residues: Translation initiation factor IF-1 (72 aa).

The region spanning 1-72 is the S1-like domain; that stretch reads MSKEEVLEFS…TKGRITYRYK (72 aa).

This sequence belongs to the IF-1 family. Component of the 30S ribosomal translation pre-initiation complex which assembles on the 30S ribosome in the order IF-2 and IF-3, IF-1 and N-formylmethionyl-tRNA(fMet); mRNA recruitment can occur at any time during PIC assembly.

It localises to the cytoplasm. Functionally, one of the essential components for the initiation of protein synthesis. Stabilizes the binding of IF-2 and IF-3 on the 30S subunit to which N-formylmethionyl-tRNA(fMet) subsequently binds. Helps modulate mRNA selection, yielding the 30S pre-initiation complex (PIC). Upon addition of the 50S ribosomal subunit IF-1, IF-2 and IF-3 are released leaving the mature 70S translation initiation complex. The chain is Translation initiation factor IF-1 from Bartonella quintana (strain Toulouse) (Rochalimaea quintana).